Consider the following 543-residue polypeptide: Mannuronan C5-epimerase (543 aa).

An N-terminal signal peptide occupies residues 1–35 (MPDISLSIPRRRLPRLRPLAAAVLGAVLLHGQAWA). PbH1 repeat units follow at residues 243–270 (GAEV…SISQ), 283–304 (RPKG…YCYE), 305–327 (ADDL…DPHD), 329–352 (SHRL…IVSR), 354–376 (VNDS…VLDR), 378–400 (SEGN…TLYE), and 401–423 (SGDN…RVRN). His326 acts as the Proton acceptor in catalysis.

The protein belongs to the D-mannuronate C5-epimerase family.

The protein localises to the periplasm. It catalyses the reaction [(1-&gt;4)-beta-D-mannuronosyl](n) = [alginate](n). It participates in glycan biosynthesis; alginate biosynthesis. Its activity is regulated as follows. Inhibited by the presence of acetyl groups on the substrate. Functionally, catalyzes the epimerization of beta-D-mannuronate to alpha-L-guluronate during the synthesis of the linear polysaccharide alginate. In addition, is part of a periplasmic protein complex that protects alginate from degradation by AlgL by channeling the newly formed alginate polymer through a scaffold that transfers the alginate polymer through the periplasmic space to the outer membrane secretin AlgE. The sequence is that of Mannuronan C5-epimerase from Pseudomonas aeruginosa (strain ATCC 15692 / DSM 22644 / CIP 104116 / JCM 14847 / LMG 12228 / 1C / PRS 101 / PAO1).